A 436-amino-acid polypeptide reads, in one-letter code: Trigger factor (436 aa).

A PPIase FKBP-type domain is found at 161–246; the sequence is EDQLNIDFVG…VNSVSEPKLP (86 aa).

The protein belongs to the FKBP-type PPIase family. Tig subfamily.

The protein localises to the cytoplasm. The catalysed reaction is [protein]-peptidylproline (omega=180) = [protein]-peptidylproline (omega=0). Functionally, involved in protein export. Acts as a chaperone by maintaining the newly synthesized protein in an open conformation. Functions as a peptidyl-prolyl cis-trans isomerase. In Pseudomonas fluorescens (strain SBW25), this protein is Trigger factor.